The primary structure comprises 99 residues: NADH-quinone oxidoreductase subunit K (99 aa).

Helical transmembrane passes span 3 to 23, 28 to 48, and 59 to 79; these read PANY…GVLL, IVMF…FVTF, and MIAF…LAII.

This sequence belongs to the complex I subunit 4L family. NDH-1 is composed of 14 different subunits. Subunits NuoA, H, J, K, L, M, N constitute the membrane sector of the complex.

The protein localises to the cell membrane. The enzyme catalyses a quinone + NADH + 5 H(+)(in) = a quinol + NAD(+) + 4 H(+)(out). Functionally, NDH-1 shuttles electrons from NADH, via FMN and iron-sulfur (Fe-S) centers, to quinones in the respiratory chain. The immediate electron acceptor for the enzyme in this species is believed to be a menaquinone. Couples the redox reaction to proton translocation (for every two electrons transferred, four hydrogen ions are translocated across the cytoplasmic membrane), and thus conserves the redox energy in a proton gradient. The protein is NADH-quinone oxidoreductase subunit K of Mycobacterium bovis (strain ATCC BAA-935 / AF2122/97).